The primary structure comprises 107 residues: Biphenyl 2,3-dioxygenase, ferredoxin component (107 aa).

Residues 4–99 (TKICSSGDLA…VKLEGDDVLV (96 aa)) enclose the Rieske domain. Residues cysteine 43, histidine 45, cysteine 62, and histidine 65 each contribute to the [2Fe-2S] cluster site.

Belongs to the bacterial ring-hydroxylating dioxygenase ferredoxin component family. In terms of assembly, the multicomponent biphenyl dioxygenase system is composed of a ferredoxin reductase (BphA4), a ferredoxin (BphA3), and a terminal oxygenase (BphA1A2). It depends on [2Fe-2S] cluster as a cofactor.

The protein operates within xenobiotic degradation; biphenyl degradation. Its function is as follows. Ferredoxin component of the biphenyl dioxygenase system that catalyzes the stereospecific dihydroxylation of the aromatic ring of biphenyl, yielding a dihydrodiol compound. Is likely involved in biphenyl degradation that allows growth of Rhodococcus sp. strain RHA1 on biphenyl as the sole source of carbon and energy. The dioxygenase system can also use naphtalene and 4-chlorobiphenyl (4-CB) as substrates, as well as some polychlorinated biphenyls (PCB) such as 2,2'-dichlorobiphenyl, 2,3-dichlorobiphenyl and 2,5,2'-trichlorobiphenyl. It exhibits weak activity toward dibenzofuran and dibenzo-p-dioxin. Electrons are transferred from NADH to the [2Fe-2S] cluster in BphA1 via FAD of BphA4 and [2Fe-2S] cluster of BphA3. This is Biphenyl 2,3-dioxygenase, ferredoxin component from Rhodococcus jostii (strain RHA1).